The primary structure comprises 256 residues: Membrane-anchored junction protein (256 aa).

Topologically, residues 1–232 (MSLKPFTYPF…HSSPPPPKEP (232 aa)) are nuclear. Disordered regions lie at residues 143–197 (KRKL…TPAS) and 211–235 (HGLQ…PGAR). Residues 164–173 (ETSSEASSNK) are compositionally biased toward polar residues. The segment covering 175–184 (PLKESKRSTD) has biased composition (basic and acidic residues). A helical membrane pass occupies residues 233-251 (GARGFLGFLSALFPFRYFF). Residues 252–256 (KKSGQ) are Perinuclear space-facing.

This sequence belongs to the MAJIN family. As to quaternary structure, component of the MAJIN-TERB1-TERB2 complex, composed of MAJIN, TERB1 and TERB2. In terms of tissue distribution, specifically expressed in germline tissues.

Its subcellular location is the nucleus inner membrane. The protein resides in the chromosome. It is found in the telomere. Its function is as follows. Meiosis-specific telomere-associated protein involved in meiotic telomere attachment to the nucleus inner membrane, a crucial step for homologous pairing and synapsis. Component of the MAJIN-TERB1-TERB2 complex, which promotes telomere cap exchange by mediating attachment of telomeric DNA to the inner nuclear membrane and replacement of the protective cap of telomeric chromosomes: in early meiosis, the MAJIN-TERB1-TERB2 complex associates with telomeric DNA and the shelterin/telosome complex. During prophase, the complex matures and promotes release of the shelterin/telosome complex from telomeric DNA. In the complex, MAJIN acts as the anchoring subunit to the nucleus inner membrane. MAJIN shows DNA-binding activity, possibly for the stabilization of telomere attachment on the nucleus inner membrane. This Mus musculus (Mouse) protein is Membrane-anchored junction protein.